Consider the following 332-residue polypeptide: Protein FAM9A (332 aa).

The segment covering 1–13 has biased composition (basic residues); that stretch reads MEPVGRKRSRKAA. 2 disordered regions span residues 1-114 and 186-293; these read MEPV…EHTG and QKDD…PTGV. 2 stretches are compositionally biased toward basic and acidic residues: residues 74–91 and 98–114; these read GKDP…FTET and DEHG…EHTG. The span at 196–217 shows a compositional bias: low complexity; sequence AAAAAAEAAAAAEAAAAAAEVI. The segment covering 218 to 275 has biased composition (acidic residues); it reads VVEDEEEEEKEEEEEKEEEEEEGEEEGGGEEGEEGGGGGEGEETEEEEEEEEEEEEEE. The segment covering 276–285 has biased composition (basic and acidic residues); that stretch reads QIKAFQEKQK.

Belongs to the XLR/SYCP3 family. Expressed exclusively in testis.

Its subcellular location is the nucleus. The protein localises to the nucleolus. The sequence is that of Protein FAM9A from Homo sapiens (Human).